The sequence spans 115 residues: NADH-ubiquinone oxidoreductase chain 3 (115 aa).

Transmembrane regions (helical) follow at residues 3 to 23 (LMITLLTNFTLATLLVTIAFW), 55 to 75 (FFLVAITFLLFDLEIALLLPL), and 84 to 104 (LNTMLTMALLLIFLLAVSLAY).

It belongs to the complex I subunit 3 family. In terms of assembly, core subunit of respiratory chain NADH dehydrogenase (Complex I) which is composed of 45 different subunits. Interacts with TMEM186. Interacts with TMEM242.

The protein resides in the mitochondrion inner membrane. The enzyme catalyses a ubiquinone + NADH + 5 H(+)(in) = a ubiquinol + NAD(+) + 4 H(+)(out). Functionally, core subunit of the mitochondrial membrane respiratory chain NADH dehydrogenase (Complex I) which catalyzes electron transfer from NADH through the respiratory chain, using ubiquinone as an electron acceptor. Essential for the catalytic activity of complex I. The protein is NADH-ubiquinone oxidoreductase chain 3 of Ovis aries (Sheep).